Here is a 228-residue protein sequence, read N- to C-terminus: Small ribosomal subunit protein uS3 (228 aa).

Residues 39–107 (VREYLQDKLK…PVHINIEEIR (69 aa)) enclose the KH type-2 domain.

This sequence belongs to the universal ribosomal protein uS3 family. As to quaternary structure, part of the 30S ribosomal subunit. Forms a tight complex with proteins S10 and S14.

Binds the lower part of the 30S subunit head. Binds mRNA in the 70S ribosome, positioning it for translation. This chain is Small ribosomal subunit protein uS3, found in Pseudomonas aeruginosa (strain UCBPP-PA14).